The sequence spans 1201 residues: DNA-directed RNA polymerase subunit beta' (1201 aa).

Residues cysteine 60, cysteine 62, cysteine 75, and cysteine 78 each contribute to the Zn(2+) site. Mg(2+)-binding residues include aspartate 449, aspartate 451, and aspartate 453. Residues cysteine 818, cysteine 892, cysteine 899, and cysteine 902 each coordinate Zn(2+).

Belongs to the RNA polymerase beta' chain family. The RNAP catalytic core consists of 2 alpha, 1 beta, 1 beta' and 1 omega subunit. When a sigma factor is associated with the core the holoenzyme is formed, which can initiate transcription. Requires Mg(2+) as cofactor. Zn(2+) serves as cofactor.

The enzyme catalyses RNA(n) + a ribonucleoside 5'-triphosphate = RNA(n+1) + diphosphate. Functionally, DNA-dependent RNA polymerase catalyzes the transcription of DNA into RNA using the four ribonucleoside triphosphates as substrates. The sequence is that of DNA-directed RNA polymerase subunit beta' from Listeria innocua serovar 6a (strain ATCC BAA-680 / CLIP 11262).